Consider the following 145-residue polypeptide: Arginine repressor (145 aa).

It belongs to the ArgR family.

Its subcellular location is the cytoplasm. The protein operates within amino-acid biosynthesis; L-arginine biosynthesis [regulation]. Regulates arginine biosynthesis genes. The polypeptide is Arginine repressor (Streptococcus pyogenes serotype M6 (strain ATCC BAA-946 / MGAS10394)).